Reading from the N-terminus, the 430-residue chain is Synaptotagmin-11 (430 aa).

At 1-15 (MAEITNIRPSFDVSP) the chain is on the vesicular side. A helical membrane pass occupies residues 16 to 36 (VAAGLIGASVLVVCVSVTVFV). Topologically, residues 37–430 (WTCCHQQAEK…IAKWHSLSEY (394 aa)) are cytoplasmic. The span at 79 to 90 (RRDKDGPRRESG) shows a compositional bias: basic and acidic residues. Disordered stretches follow at residues 79-120 (RRDK…CMDQ) and 132-152 (RSPM…SSPE). Ser133 bears the Phosphoserine mark. Residues 134 to 150 (PMTSLTPGESKATSPSS) show a composition bias toward polar residues. C2 domains follow at residues 156–278 (MLGS…QLTR) and 290–425 (SRGE…AKWH). The Ca(2+) site is built by Asp249, Ser252, and Asp255.

It belongs to the synaptotagmin family. Homodimer. Can also form heterodimers. Interacts with PRKN. Interacts (via C2 2 domain) with AGO2 and SND1; the interaction with SND1 is direct. Interacts with KIF1A; the interaction increases in presence of calcium. The cofactor is Ca(2+). In terms of processing, ubiquitinated, at least by PRKN, and targeted to the proteasome complex for degradation. Ubiquitination is inhibited by ATP13A2. Expressed in cerebellun, cerebellar cortex, hippocampus, olfactory bulb and spinal cord (at protein level). Expressed by neurons, astrocytes and microglia (at protein level). Expressed in macrophages (at protein level).

The protein localises to the cytoplasmic vesicle membrane. It is found in the perikaryon. Its subcellular location is the golgi apparatus. It localises to the trans-Golgi network membrane. The protein resides in the recycling endosome membrane. The protein localises to the lysosome membrane. It is found in the cytoplasmic vesicle. Its subcellular location is the phagosome. It localises to the cell projection. The protein resides in the axon. The protein localises to the dendrite. It is found in the postsynaptic density. Its subcellular location is the clathrin-coated vesicle membrane. Its function is as follows. Synaptotagmin family member involved in vesicular and membrane trafficking which does not bind Ca(2+). Inhibits clathrin-mediated and bulk endocytosis, functions to ensure precision in vesicle retrieval. Plays an important role in dopamine transmission by regulating endocytosis and the vesicle-recycling process. Essential component of a neuronal vesicular trafficking pathway that differs from the synaptic vesicle trafficking pathway but is crucial for development and synaptic plasticity. In macrophages and microglia, inhibits the conventional cytokine secretion, of at least IL6 and TNF, and phagocytosis. In astrocytes, regulates lysosome exocytosis, mechanism required for the repair of injured astrocyte cell membrane. Required for the ATP13A2-mediated regulation of the autophagy-lysosome pathway. The protein is Synaptotagmin-11 of Mus musculus (Mouse).